The sequence spans 78 residues: Small ribosomal subunit protein bS18 (78 aa).

It belongs to the bacterial ribosomal protein bS18 family. Part of the 30S ribosomal subunit. Forms a tight heterodimer with protein bS6.

Its function is as follows. Binds as a heterodimer with protein bS6 to the central domain of the 16S rRNA, where it helps stabilize the platform of the 30S subunit. The sequence is that of Small ribosomal subunit protein bS18 from Geobacillus sp. (strain WCH70).